Here is a 778-residue protein sequence, read N- to C-terminus: Kin of IRRE-like protein 3 (778 aa).

An N-terminal signal peptide occupies residues 1-21; the sequence is MKPFQLDLLFVCFFLFSQELG. Topologically, residues 22-535 are extracellular; it reads LQKRGCCLVL…GLEAESVPMA (514 aa). Ig-like C2-type domains follow at residues 48–142, 147–243, 249–330, 335–415, and 419–515; these read YSFS…ARLT, PDDP…TSVT, PPLV…RTVD, PRMT…VTLT, and PPII…IRLK. Cysteines 69 and 127 form a disulfide. Asparagine 167 carries N-linked (GlcNAc...) asparagine glycosylation. Cysteine 170 and cysteine 227 are joined by a disulfide. Asparagine 253 is a glycosylation site (N-linked (GlcNAc...) asparagine). An intrachain disulfide couples cysteine 271 to cysteine 314. Asparagine 324 is a glycosylation site (N-linked (GlcNAc...) asparagine). 2 cysteine pairs are disulfide-bonded: cysteine 356/cysteine 398 and cysteine 440/cysteine 499. An N-linked (GlcNAc...) asparagine glycan is attached at asparagine 498. The helical transmembrane segment at 536 to 556 threads the bilayer; sequence VIIGVAVGAGVAFLVLMATIV. The Cytoplasmic segment spans residues 557–778; sequence AFCCARSQRN…PLQRRMQTHV (222 aa). Residues 727-736 show a composition bias toward polar residues; it reads CDSSVSSSGK. Positions 727 to 778 are disordered; sequence CDSSVSSSGKQDGYVQFDKASKASASSSHHSQSSSQNSDPSRPLQRRMQTHV. Residues 748–762 are compositionally biased toward low complexity; sequence KASASSSHHSQSSSQ.

This sequence belongs to the immunoglobulin superfamily. Homodimer; mediates homophilic interactions to promote cell adhesion. Interacts with NPHS1; forms heterodimers with NPHS1. Interacts with NPHS2/podocin (via the C-terminus). Interacts with CASK. Interacts (via extracellular region) with MAP1B. Interacts (via extracellular region) with MYO16. Interacts (via intracellular region) with ATP1B1. Interacts (via intracellular region) with SHMT2. Interacts (via intracellular region) with UFC1. Post-translationally, undergoes proteolysis by a metalloprotease and gives rise to a soluble form. As to expression, expressed in fetal and adult brain. Also expressed in kidney, specifically in podocytes of kidney glomeruli. Also expressed in skeletal muscle.

The protein localises to the cell membrane. It is found in the secreted. In terms of biological role, synaptic adhesion molecule required for the formation of target-specific synapses. Required for formation of target-specific synapses at hippocampal mossy fiber synapses. Required for formation of mossy fiber filopodia, the synaptic structures connecting dentate granule and GABA neurons. Probably acts as a homophilic adhesion molecule that promotes trans-cellular interactions and stabilize mossy fiber filipodia contact and subsequent synapse formation. Required for the coalescence of vomeronasal sensory neuron axons. May be involved in the hematopoietic supportive capacity of stroma cells; the secreted extracellular domain is directly responsible for supporting hematopoietic stem cells. In Homo sapiens (Human), this protein is Kin of IRRE-like protein 3.